We begin with the raw amino-acid sequence, 241 residues long: Probable transcriptional regulatory protein Daro_4067 (241 aa).

Positions 1-22 are disordered; the sequence is MAGHSKWANIQHRKGRQDEKRG.

Belongs to the TACO1 family.

The protein resides in the cytoplasm. This is Probable transcriptional regulatory protein Daro_4067 from Dechloromonas aromatica (strain RCB).